The following is a 335-amino-acid chain: DNA-directed RNA polymerase subunit alpha (335 aa).

The tract at residues 1–233 (MIRDKISVSI…DLFIPFLHGE (233 aa)) is alpha N-terminal domain (alpha-NTD). The interval 264 to 335 (KEKIAFKHIF…KRFAIDPPRN (72 aa)) is alpha C-terminal domain (alpha-CTD).

Belongs to the RNA polymerase alpha chain family. In terms of assembly, in plastids the minimal PEP RNA polymerase catalytic core is composed of four subunits: alpha, beta, beta', and beta''. When a (nuclear-encoded) sigma factor is associated with the core the holoenzyme is formed, which can initiate transcription.

It is found in the plastid. The protein resides in the chloroplast. The enzyme catalyses RNA(n) + a ribonucleoside 5'-triphosphate = RNA(n+1) + diphosphate. Its function is as follows. DNA-dependent RNA polymerase catalyzes the transcription of DNA into RNA using the four ribonucleoside triphosphates as substrates. This Pinus koraiensis (Korean pine) protein is DNA-directed RNA polymerase subunit alpha.